We begin with the raw amino-acid sequence, 295 residues long: Acetylglutamate kinase (295 aa).

Residues 70-71 (GG), R92, and N191 each bind substrate.

This sequence belongs to the acetylglutamate kinase family. ArgB subfamily.

Its subcellular location is the cytoplasm. The enzyme catalyses N-acetyl-L-glutamate + ATP = N-acetyl-L-glutamyl 5-phosphate + ADP. It functions in the pathway amino-acid biosynthesis; L-arginine biosynthesis; N(2)-acetyl-L-ornithine from L-glutamate: step 2/4. Catalyzes the ATP-dependent phosphorylation of N-acetyl-L-glutamate. The sequence is that of Acetylglutamate kinase from Mycobacterium avium (strain 104).